The chain runs to 142 residues: Ribosome-binding factor A (142 aa).

Positions 123-142 (VQRDLDSAPEDDEPETGTGH) are disordered. A compositionally biased stretch (acidic residues) spans 129 to 142 (SAPEDDEPETGTGH).

The protein belongs to the RbfA family. Monomer. Binds 30S ribosomal subunits, but not 50S ribosomal subunits or 70S ribosomes.

The protein resides in the cytoplasm. One of several proteins that assist in the late maturation steps of the functional core of the 30S ribosomal subunit. Associates with free 30S ribosomal subunits (but not with 30S subunits that are part of 70S ribosomes or polysomes). Required for efficient processing of 16S rRNA. May interact with the 5'-terminal helix region of 16S rRNA. This is Ribosome-binding factor A from Methylobacterium radiotolerans (strain ATCC 27329 / DSM 1819 / JCM 2831 / NBRC 15690 / NCIMB 10815 / 0-1).